A 499-amino-acid chain; its full sequence is Aldehyde dehydrogenase 1 (499 aa).

Residues 164–166, 164–167, 190–193, 223–224, 243–244, 243–248, and 266–268 each bind NAD(+); these read IPW, IPWN, KPAE, GS, GSTKVG, and ELG. The active-site Proton acceptor is Glu266. Cys300 functions as the Nucleophile in the catalytic mechanism. NAD(+) is bound by residues 346–350 and 397–399; these read QQYEK and EIF.

This sequence belongs to the aldehyde dehydrogenase family. In terms of assembly, homotetramer. As to expression, expressed in flowers and disk florets.

It catalyses the reaction an aldehyde + NAD(+) + H2O = a carboxylate + NADH + 2 H(+). It carries out the reaction an aldehyde + NADP(+) + H2O = a carboxylate + NADPH + 2 H(+). The enzyme catalyses octanal + NADP(+) + H2O = octanoate + NADPH + 2 H(+). The catalysed reaction is (1R,3R)-chrysanthemal + NAD(+) + H2O = (1R,3R)-chrysanthemate + NADH + 2 H(+). It catalyses the reaction (1R,3R)-chrysanthemal + NADP(+) + H2O = (1R,3R)-chrysanthemate + NADPH + 2 H(+). It carries out the reaction (E)-hept-2-enal + NADP(+) + H2O = (E)-hept-2-enoate + NADPH + 2 H(+). The enzyme catalyses dodecanal + NADP(+) + H2O = dodecanoate + NADPH + 2 H(+). The catalysed reaction is citral + NADP(+) + H2O = 3,7-dimethylocta-2,6-dienoate + NADPH + 2 H(+). It catalyses the reaction perillyl aldehyde + NADP(+) + H2O = perillate + NADPH + 2 H(+). It carries out the reaction (2E,6E)-farnesal + NADP(+) + H2O = (2E,6E)-farnesoate + NADPH + 2 H(+). The enzyme catalyses (S)-(-)-citronellal + NADP(+) + H2O = (S)-(-)-citronellate + NADPH + 2 H(+). It functions in the pathway isoprenoid biosynthesis. Component of the monoterpenoid pyrethrins biosynthesis; pyrethrins are widely used plant-derived pesticide. Mediates the conversion of trans-chrysanthemal into trans-chrysanthemic acid. Can also use octanal, hept-2-enal, dodecanal, citral, farnesal, citronellal and perillyl aldehyde as substrates. This Tanacetum cinerariifolium (Dalmatian daisy) protein is Aldehyde dehydrogenase 1.